Reading from the N-terminus, the 186-residue chain is Translation initiation factor IF-3 (186 aa).

This sequence belongs to the IF-3 family. Monomer.

It is found in the cytoplasm. Its function is as follows. IF-3 binds to the 30S ribosomal subunit and shifts the equilibrium between 70S ribosomes and their 50S and 30S subunits in favor of the free subunits, thus enhancing the availability of 30S subunits on which protein synthesis initiation begins. This Chlamydia muridarum (strain MoPn / Nigg) protein is Translation initiation factor IF-3.